Reading from the N-terminus, the 280-residue chain is Four and a half LIM domains protein 1 (280 aa).

An N-acetylserine modification is found at Ser2. Lys4 carries the post-translational modification N6-acetyllysine. Residues 7–31 (CHYCRDPLQGKKYVQKDGRHCCLKC) form a C4-type zinc finger. LIM zinc-binding domains lie at 40-92 (CVDC…CNKC), 101-153 (CKGC…CVTC), 162-212 (CVKC…CVDC), and 221-276 (CAGC…CPDC). Residue Lys86 forms a Glycyl lysine isopeptide (Lys-Gly) (interchain with G-Cter in SUMO2) linkage.

As to expression, isoform 1 seems to be most abundant in each tissue and isoform 2 much less abundant. Isoform 1 is highly expressed in skeletal muscle and lung, and to a lesser extent in heart, brain and kidney. Isoform 2 was found in brain, lung kidney and genital organs.

Its subcellular location is the cytoplasm. It is found in the nucleus. In terms of biological role, may have an involvement in muscle development or hypertrophy. Isoform 2 binds to RBP-J and plays a negative regulatory role in the RBP-J-mediated transcription in mammalian systems. The protein is Four and a half LIM domains protein 1 (Fhl1) of Mus musculus (Mouse).